The following is a 1054-amino-acid chain: Reverse gyrase (1054 aa).

An RG N-terminal-type zinc finger spans residues 1–43 (MIPVVYSNLCPVCGGDLESKEIEKHVCFRKKRSLCLFPEDFLL). Residues cysteine 10, cysteine 13, cysteine 27, and cysteine 35 each contribute to the Zn(2+) site. Cysteine 35 and cysteine 650 are disulfide-bonded. Positions 61, 84, 85, and 86 each coordinate ATP. In terms of domain architecture, Helicase ATP-binding spans 65–245 (AKRILRKESF…FRQLLNFDIG (181 aa)). Positions 182–185 (DDVD) match the DEAD box motif. The interval 352–427 (PSFRVTIEDI…EGEVIFPDLR (76 aa)) is latch region. The tract at residues 502–1054 (DLIKPALFIV…DLYAEIKSID (553 aa)) is topoisomerase I. The 157-residue stretch at 506–662 (PALFIVESPT…VKRAEFHEVT (157 aa)) folds into the Toprim domain. Glutamate 512 lines the Mg(2+) pocket. Residues 581–609 (IKRCRDCGYQFTEDRESCPKCGSENVDNS) form an RG C-terminal-type zinc finger. Cysteine 584, cysteine 587, cysteine 598, and cysteine 601 together coordinate Zn(2+). A Mg(2+)-binding site is contributed by aspartate 631. One can recognise a Topo IA-type catalytic domain in the interval 677-1054 (DENLVKAQVV…DLYAEIKSID (378 aa)). Tyrosine 809 serves as the catalytic O-(5'-phospho-DNA)-tyrosine intermediate.

The protein in the N-terminal section; belongs to the DEAD box helicase family. DDVD subfamily. It in the C-terminal section; belongs to the type IA topoisomerase family. Monomer. Requires Zn(2+) as cofactor. The cofactor is Mg(2+).

Its subcellular location is the cytoplasm. It carries out the reaction ATP + H2O = ADP + phosphate + H(+). Modifies the topological state of DNA by introducing positive supercoils in an ATP-dependent process, increasing the linking number in steps of +1. Very efficient supercoiling occurs on relaxed DNA with a single-stranded bubble; the minimal bubble is 20 nucleotides (nt) and up to 10 positive supercoils can be introduced into a 3.1 kb plasmid with a 50 nt bubble. Positively supercoils DNA with all (d)NTPS, although it requires about 10-fold more of non-(d)ATP. In the absence of ATP (or at low levels of enzyme), or in the presence of ADP, relaxes negative supercoils. Only relaxes positive supercoils when the substrate contains a bubble. Also promotes strand annealing of complementary ssDNA circles. Binds to single-stranded DNA, transiently cleaves and then rejoins the ends, introducing a positive supercoil in the process. The scissile phosphodiester is attacked by the catalytic tyrosine of the enzyme, resulting in the formation of a DNA-(5'-phosphotyrosyl)-enzyme intermediate. Probably involved in rewinding DNA strands in regions of the chromosome that have opened up to allow replication, transcription, DNA repair and/or for DNA protection. Its function is as follows. In vitro protects DNA against degradation at 90 degrees Celsius, reducing dsDNA breakage about 8-fold; ATP hydrolysis is not necessary, while ADP decreases the protection somewhat. Coats all forms of dsDNA; the DNA is protected against cleavage and transcription. Recognizes nicked DNA and forms a coat at the nicking site, which may help hold DNA in a structure amenable to repair. This chain is Reverse gyrase, found in Archaeoglobus fulgidus (strain ATCC 49558 / DSM 4304 / JCM 9628 / NBRC 100126 / VC-16).